The following is a 685-amino-acid chain: Polyphosphate kinase (685 aa).

Asparagine 45 is an ATP binding site. Mg(2+) is bound by residues arginine 375 and arginine 405. The active-site Phosphohistidine intermediate is the histidine 435. The ATP site is built by tyrosine 468, arginine 564, and histidine 592.

The protein belongs to the polyphosphate kinase 1 (PPK1) family. Mg(2+) is required as a cofactor. Post-translationally, an intermediate of this reaction is the autophosphorylated ppk in which a phosphate is covalently linked to a histidine residue through a N-P bond.

It catalyses the reaction [phosphate](n) + ATP = [phosphate](n+1) + ADP. Its function is as follows. Catalyzes the reversible transfer of the terminal phosphate of ATP to form a long-chain polyphosphate (polyP). The protein is Polyphosphate kinase of Neisseria meningitidis serogroup A / serotype 4A (strain DSM 15465 / Z2491).